A 321-amino-acid chain; its full sequence is Necdin (321 aa).

A disordered region spans residues 1 to 96 (MSEQSKDLSD…QPGPAPPAPA (96 aa)). Residues 20–35 (SEVHSSPGVSEGVPPS) show a composition bias toward low complexity. Residues 98 to 297 (LVQKAHELMW…QAWPSRYREA (200 aa)) form the MAGE domain.

Binds to the transactivation domains of E2F1 and p53. Binds also SV40 large T antigen and adenovirus E1A. Interacts with nucleobindin 1 and 2. Almost ubiquitous. Detected in fetal brain, lung, liver and kidney; in adult heart, brain, placenta, lung, liver, skeletal muscle, kidney, pancreas, spleen, thymus, prostate, testis, ovary, small intestine and colon. Not detected in peripheral blood leukocytes. In brain, restricted to post-mitotic neurons.

Its subcellular location is the perikaryon. It localises to the nucleus. Functionally, growth suppressor that facilitates the entry of the cell into cell cycle arrest. Functionally similar to the retinoblastoma protein it binds to and represses the activity of cell-cycle-promoting proteins such as SV40 large T antigen, adenovirus E1A, and the transcription factor E2F. Necdin also interacts with p53 and works in an additive manner to inhibit cell growth. Also functions as a transcription factor and directly binds to specific guanosine-rich DNA sequences. The chain is Necdin (NDN) from Homo sapiens (Human).